Reading from the N-terminus, the 352-residue chain is Desmethylxanthohumol 6'-O-methyltransferase (352 aa).

Asp-219 lines the S-adenosyl-L-methionine pocket. The Proton acceptor role is filled by His-257.

It belongs to the class I-like SAM-binding methyltransferase superfamily. Cation-independent O-methyltransferase family. Homodimer. Highly expressed in lupulin glands. Detected in early-, mid- and late-stage cones.

It localises to the cytoplasm. It catalyses the reaction desmethylxanthohumol + S-adenosyl-L-methionine = xanthohumol + S-adenosyl-L-homocysteine + H(+). It carries out the reaction xanthogalenol + S-adenosyl-L-methionine = 4'-O-methylxanthohumol + S-adenosyl-L-homocysteine + H(+). The protein operates within secondary metabolite biosynthesis. With respect to regulation, inhibited by S-adenosyl homocysteine. In terms of biological role, involved in the biosynthesis of prenylated phenolics natural products which contribute to the bitter taste of beer and display broad biological activities. Catalyzes the biosynthesis of xanthohumol. Methylates desmethylxanthohumol and xanthogalenol, but not caffeic acid, prenylflavanones, simple phenols or phenylpropanoids. The polypeptide is Desmethylxanthohumol 6'-O-methyltransferase (Humulus lupulus (European hop)).